The following is a 681-amino-acid chain: MITFADLAEPAPGAERCVDRQLWLACAGGMCTVPPVGAAVYYFPQGHAEHALGLAAPELSAARVPALVPCRVASVRYMADPDTDEVFARIRLVPLRAAEDGDVEEDGAAAGEEHEKPASFAKTLTQSDANNGGGFSVPRYCAETIFPRLDYAADPPVQTVVAKDVHGVAWNFRHIYRGTPRRHLLTTGWSTFVNQKKLVAGDSIVFLRGDGGDLHVGIRRAKRGFCGGGGGAEEASLPGWDQYGGLMRGNASPCAAAKGRGKVRAEDLVEAARLANGGQPFEVVYYPRASTPEFCVRAAAVRAAMRVQWCPGMRFKMAFETEDSSRISWFMGTVASVQVADPIRWPQSPWRLLQVTWDEPDLLQNVKRVSPWLVELVSSMPAINLSSFSPPRKKPRILAYPEFPFEGQLLNPAFPPNPLAHGHHHYHHNHPSFFPFPDVSAPAGIQGARHAQFGPSLSDLHLTHLQSSLMYPGLRRPDHVGPTSIPPPRISTDLTMGSSPPARALSMGAKKPDDAKPPGLMLFGQRILTERQMSLSGTTSPAATGNSSLNWNTEKGASEGSGSGVIQNSPTDNTSSERLQWFRENSTVSELGLEPGQCKVFIESDTVGRNLDLSSLASFEQLYGRLSEMFCIDSAELRSRVLYRGATGEVRHAGDEPFSEFIKLARRLTILTDAGSDNLGS.

Positions 120-222 (FAKTLTQSDA…DLHVGIRRAK (103 aa)) form a DNA-binding region, TF-B3. 2 disordered regions span residues 474–518 (LRRP…AKPP) and 534–577 (SLSG…TSSE). Composition is skewed to polar residues over residues 534–555 (SLSGTTSPAATGNSSLNWNTEK) and 564–577 (GVIQNSPTDNTSSE). In terms of domain architecture, PB1 spans 595–675 (PGQCKVFIES…RRLTILTDAG (81 aa)).

This sequence belongs to the ARF family. Homodimers and heterodimers. As to expression, expressed in roots, culms, leaves and young panicles.

It localises to the nucleus. Its function is as follows. Auxin response factors (ARFs) are transcriptional factors that bind specifically to the DNA sequence 5'-TGTCTC-3' found in the auxin-responsive promoter elements (AuxREs). The protein is Auxin response factor 8 (ARF8) of Oryza sativa subsp. japonica (Rice).